Here is a 185-residue protein sequence, read N- to C-terminus: UPF0200 protein Mevan_0592 (185 aa).

Position 8–15 (8–15) interacts with ATP; sequence GMPGSGKS.

This sequence belongs to the UPF0200 family.

The protein is UPF0200 protein Mevan_0592 of Methanococcus vannielii (strain ATCC 35089 / DSM 1224 / JCM 13029 / OCM 148 / SB).